Consider the following 786-residue polypeptide: Sucrose synthase (786 aa).

Residues 259 to 736 form a GT-B glycosyltransferase region; sequence MIFSLVVLSP…ALKRVEERYN (478 aa).

It belongs to the glycosyltransferase 1 family. As to quaternary structure, homotetramer.

It carries out the reaction an NDP-alpha-D-glucose + D-fructose = a ribonucleoside 5'-diphosphate + sucrose + H(+). In terms of biological role, catalyzes the reversible conversion of sucrose and a nucleotide disphosphate (NDP) into fructose and NDP-glucose; although the reaction is freely reversible in vitro, the physiological reaction seems to be sucrose cleavage. Unlike characterized plant enzymes prefers ADP as a cosubstrate, whereas plants prefer UDP. Its preference for ADP over UDP suggests it may directly link sucrose and glycogen metabolism. The chain is Sucrose synthase from Denitrovibrio acetiphilus (strain DSM 12809 / NBRC 114555 / N2460).